The primary structure comprises 469 residues: Serine hydroxymethyltransferase, cytosolic (469 aa).

N6-(pyridoxal phosphate)lysine is present on lysine 248.

It belongs to the SHMT family. In terms of assembly, homotetramer. It depends on pyridoxal 5'-phosphate as a cofactor.

It is found in the cytoplasm. It catalyses the reaction (6R)-5,10-methylene-5,6,7,8-tetrahydrofolate + glycine + H2O = (6S)-5,6,7,8-tetrahydrofolate + L-serine. It participates in one-carbon metabolism; tetrahydrofolate interconversion. Functionally, interconversion of serine and glycine. The polypeptide is Serine hydroxymethyltransferase, cytosolic (SHM2) (Eremothecium gossypii (strain ATCC 10895 / CBS 109.51 / FGSC 9923 / NRRL Y-1056) (Yeast)).